The following is a 608-amino-acid chain: UvrABC system protein C (608 aa).

Residues 16-94 (NRPGVYRMFD…IKEWRPPYNI (79 aa)) form the GIY-YIG domain. One can recognise a UVR domain in the interval 204–239 (NALADELNTGMEQAAMRLDFEKAAELRDQVAILRRV).

This sequence belongs to the UvrC family. Interacts with UvrB in an incision complex.

It localises to the cytoplasm. Its function is as follows. The UvrABC repair system catalyzes the recognition and processing of DNA lesions. UvrC both incises the 5' and 3' sides of the lesion. The N-terminal half is responsible for the 3' incision and the C-terminal half is responsible for the 5' incision. The chain is UvrABC system protein C from Pseudomonas paraeruginosa (strain DSM 24068 / PA7) (Pseudomonas aeruginosa (strain PA7)).